The chain runs to 188 residues: dCTP deaminase (188 aa).

Residues 111-116 (KSTYAR), 135-137 (TLE), Q156, Y170, and Q180 contribute to the dCTP site. E137 functions as the Proton donor/acceptor in the catalytic mechanism.

The protein belongs to the dCTP deaminase family. As to quaternary structure, homotrimer.

The catalysed reaction is dCTP + H2O + H(+) = dUTP + NH4(+). Its pathway is pyrimidine metabolism; dUMP biosynthesis; dUMP from dCTP (dUTP route): step 1/2. Its function is as follows. Catalyzes the deamination of dCTP to dUTP. The sequence is that of dCTP deaminase from Acidithiobacillus ferrooxidans (strain ATCC 23270 / DSM 14882 / CIP 104768 / NCIMB 8455) (Ferrobacillus ferrooxidans (strain ATCC 23270)).